A 362-amino-acid chain; its full sequence is Endolytic peptidoglycan transglycosylase RlpA (362 aa).

An N-terminal signal peptide occupies residues 1 to 17; sequence MRKQWLGICIAAGMLAA. Cys-18 carries N-palmitoyl cysteine lipidation. The S-diacylglycerol cysteine moiety is linked to residue Cys-18. Residues 198-276 form a disordered region; it reads PDLSGGAGTS…PSTTPATSPA (79 aa). The segment covering 262–276 has biased composition (low complexity); the sequence is PVVTAPSTTPATSPA. Positions 285–361 constitute an SPOR domain; that stretch reads QSASGNFMVQ…AQLQSFITTA (77 aa).

It belongs to the RlpA family.

Its subcellular location is the cell membrane. Lytic transglycosylase with a strong preference for naked glycan strands that lack stem peptides. The chain is Endolytic peptidoglycan transglycosylase RlpA from Escherichia coli O157:H7.